The following is a 188-amino-acid chain: Peptidyl-tRNA hydrolase (188 aa).

Phe-14 contributes to the tRNA binding site. The active-site Proton acceptor is His-19. TRNA is bound by residues Tyr-64, Asn-66, and Asn-112.

The protein belongs to the PTH family. Monomer.

Its subcellular location is the cytoplasm. The enzyme catalyses an N-acyl-L-alpha-aminoacyl-tRNA + H2O = an N-acyl-L-amino acid + a tRNA + H(+). In terms of biological role, hydrolyzes ribosome-free peptidyl-tRNAs (with 1 or more amino acids incorporated), which drop off the ribosome during protein synthesis, or as a result of ribosome stalling. Its function is as follows. Catalyzes the release of premature peptidyl moieties from peptidyl-tRNA molecules trapped in stalled 50S ribosomal subunits, and thus maintains levels of free tRNAs and 50S ribosomes. This Aster yellows witches'-broom phytoplasma (strain AYWB) protein is Peptidyl-tRNA hydrolase.